Consider the following 90-residue polypeptide: MKKNSFISVISDEKKEENKGSVEFQVFCFTNKIRRLTLHLELHKKDYSSQRGLRKTLGKRQRLLAYLLKINGVRYKELISKLNIRELKTR.

Component of the chloroplast small ribosomal subunit (SSU). Mature 70S chloroplast ribosomes of higher plants consist of a small (30S) and a large (50S) subunit. The 30S small subunit contains 1 molecule of ribosomal RNA (16S rRNA) and 24 different proteins. The 50S large subunit contains 3 rRNA molecules (23S, 5S and 4.5S rRNA) and 33 different proteins.

It is found in the plastid. The protein localises to the chloroplast. Component of the chloroplast ribosome (chloro-ribosome), a dedicated translation machinery responsible for the synthesis of chloroplast genome-encoded proteins, including proteins of the transcription and translation machinery and components of the photosynthetic apparatus. This chain is Small ribosomal subunit protein uS15c (rps15), found in Spinacia oleracea (Spinach).